We begin with the raw amino-acid sequence, 372 residues long: Forkhead box protein F1-B (372 aa).

The segment at 1–51 (MTAEIQQPPSQPPAQSSPMSAATDKHGGQPSAMESASCATKTKKTNAGIRR) is disordered. Over residues 13–22 (PAQSSPMSAA) the composition is skewed to low complexity. The segment at residues 54–148 (KPPYSYIALI…EEGSFRRRPR (95 aa)) is a DNA-binding region (fork-head).

In terms of tissue distribution, at the late gastrula stage, expressed in the presumptive ventrolateral mesoderm. During neurulation and tailbud stages, expressed in the lateral plate mesoderm and in the neural crest-derived structures of the head and branchial arches. During tailbud stages, expressed in the pronephros and pronephros ducts and in cells that migrate from the dorsolateral plate to the ventral region of the embryo (with the notable exception of the heart). These cells may represent hematopoietic or endothelial progenitor cells.

The protein resides in the nucleus. Functionally, probable transcription factor. Required for smooth muscle (visceral mesoderm) differentiation during gut development. Also required for normal proliferation of the lateral plate mesoderm. Acts as a downstream mediator of bmp4-signaling. The sequence is that of Forkhead box protein F1-B (foxf1-b) from Xenopus laevis (African clawed frog).